The primary structure comprises 634 residues: DNA-directed RNA polymerase subunit gamma (634 aa).

Zn(2+) contacts are provided by C74, C76, C89, and C92. D471, D473, and D475 together coordinate Mg(2+).

Belongs to the RNA polymerase beta' chain family. RpoC1 subfamily. In terms of assembly, in cyanobacteria the RNAP catalytic core is composed of 2 alpha, 1 beta, 1 beta', 1 gamma and 1 omega subunit. When a sigma factor is associated with the core the holoenzyme is formed, which can initiate transcription. It depends on Mg(2+) as a cofactor. Requires Zn(2+) as cofactor.

The catalysed reaction is RNA(n) + a ribonucleoside 5'-triphosphate = RNA(n+1) + diphosphate. DNA-dependent RNA polymerase catalyzes the transcription of DNA into RNA using the four ribonucleoside triphosphates as substrates. The polypeptide is DNA-directed RNA polymerase subunit gamma (Synechococcus sp. (strain WH7803)).